Here is a 580-residue protein sequence, read N- to C-terminus: Frizzled and smoothened-like protein K (580 aa).

The signal sequence occupies residues 1 to 18 (MRVLFILFLFYFYTYTEA). Over 19-236 (QQYYPIDPTG…QWDNIFDTSD (218 aa)) the chain is Extracellular. The 130-residue stretch at 25-154 (DPTGKCEQYI…SSDYNLTTYG (130 aa)) folds into the FZ domain. N-linked (GlcNAc...) asparagine glycosylation is found at Asn52, Asn97, Asn149, Asn170, and Asn186. A helical transmembrane segment spans residues 237–257 (AISLVSLLCSVYLFITYMVIN). Topologically, residues 258–264 (PKRNKYD) are cytoplasmic. A helical membrane pass occupies residues 265–285 (YFFSFFVLSIILMSIAGTIGF). Over 286–308 (SVGGTRKLLCPEINRRGVYTDPA) the chain is Extracellular. The helical transmembrane segment at 309-329 (VAAAGWIFQFAIINAILWFSI) threads the bilayer. Over 330–349 (NSFELWFQIKFIKRKLHLIK) the chain is Cytoplasmic. The helical transmembrane segment at 350–370 (FYILAVLVISIALSVPLSAIG) threads the bilayer. Topologically, residues 371-391 (EFNAGLGNFVVWIESGKYQNW) are extracellular. The helical transmembrane segment at 392-412 (FFWGPLGIVLTVGTTFIGLVI) threads the bilayer. Residues 413 to 434 (WEIYKIVSSTNKSDFFKLQLKP) lie on the Cytoplasmic side of the membrane. Residues 435–455 (LMNMLLIYLTFVYLFGYNFYI) form a helical membrane-spanning segment. Residues 456-490 (HNSLNGFYGSSEEFKNCIISTDGKDCRIQGPPYSS) are Extracellular-facing. A helical transmembrane segment spans residues 491-511 (ILMFVFCLRIYGVYCIALYGF). Residues 512–580 (SPKTRSIWSN…SMEPDEIILR (69 aa)) lie on the Cytoplasmic side of the membrane. The Lys-Thr-X-X-X-Trp motif, mediates interaction with the PDZ domain of Dvl family members signature appears at 514–519 (KTRSIW). A disordered region spans residues 542–580 (TTKGGTSSTDIKMSTNNNSNMDSGGGKSSSMEPDEIILR). Residues 551 to 563 (DIKMSTNNNSNMD) show a composition bias toward polar residues.

It belongs to the G-protein coupled receptor Fz/Smo family.

The protein localises to the membrane. This is Frizzled and smoothened-like protein K (fslK) from Dictyostelium discoideum (Social amoeba).